Here is a 345-residue protein sequence, read N- to C-terminus: Adenylosuccinate synthetase (345 aa).

GTP contacts are provided by residues 18–24 and 48–50; these read GDEGKGK and GHT. Asp-19 acts as the Proton acceptor in catalysis. The Mg(2+) site is built by Asp-19 and Gly-48. IMP contacts are provided by residues 19-22, 46-49, Thr-133, Arg-147, Gln-185, Thr-200, and Arg-262; these read DEGK and NAGH. His-49 (proton donor) is an active-site residue. Residue 258-264 coordinates substrate; it reads TVTGRRR. Residues Arg-264, 290–292, and 330–332 contribute to the GTP site; these read GLD and STG.

This sequence belongs to the adenylosuccinate synthetase family. In terms of assembly, homodimer. Mg(2+) serves as cofactor.

The protein localises to the cytoplasm. The enzyme catalyses IMP + L-aspartate + GTP = N(6)-(1,2-dicarboxyethyl)-AMP + GDP + phosphate + 2 H(+). It participates in purine metabolism; AMP biosynthesis via de novo pathway; AMP from IMP: step 1/2. Plays an important role in the de novo pathway of purine nucleotide biosynthesis. Catalyzes the first committed step in the biosynthesis of AMP from IMP. The polypeptide is Adenylosuccinate synthetase (Methanocaldococcus jannaschii (strain ATCC 43067 / DSM 2661 / JAL-1 / JCM 10045 / NBRC 100440) (Methanococcus jannaschii)).